The sequence spans 158 residues: Glutathione peroxidase-like peroxiredoxin gpx1 (158 aa).

The active-site Cysteine sulfenic acid (-SOH) intermediate is cysteine 36. The cysteines at positions 36 and 82 are disulfide-linked.

Belongs to the glutathione peroxidase family. As to quaternary structure, monomer.

The protein localises to the cytoplasm. It is found in the mitochondrion. It carries out the reaction a hydroperoxide + [thioredoxin]-dithiol = an alcohol + [thioredoxin]-disulfide + H2O. Functionally, glutathione peroxidase-like protein that protects cells during oxidative stress. Has peroxidase activity reducing hydrogen peroxide, alkyl and phospholipid hydroperoxides using preferentially thioredoxin as a reducing power. May act as a scavenger of H(2)O(2). This Schizosaccharomyces pombe (strain 972 / ATCC 24843) (Fission yeast) protein is Glutathione peroxidase-like peroxiredoxin gpx1.